The chain runs to 92 residues: Small ribosomal subunit protein uS19 (92 aa).

The protein belongs to the universal ribosomal protein uS19 family.

In terms of biological role, protein S19 forms a complex with S13 that binds strongly to the 16S ribosomal RNA. This chain is Small ribosomal subunit protein uS19, found in Rhodopseudomonas palustris (strain HaA2).